The sequence spans 349 residues: Histidinol-phosphate aminotransferase (349 aa).

Lysine 206 carries the post-translational modification N6-(pyridoxal phosphate)lysine.

This sequence belongs to the class-II pyridoxal-phosphate-dependent aminotransferase family. Histidinol-phosphate aminotransferase subfamily. Homodimer. It depends on pyridoxal 5'-phosphate as a cofactor.

The enzyme catalyses L-histidinol phosphate + 2-oxoglutarate = 3-(imidazol-4-yl)-2-oxopropyl phosphate + L-glutamate. Its pathway is amino-acid biosynthesis; L-histidine biosynthesis; L-histidine from 5-phospho-alpha-D-ribose 1-diphosphate: step 7/9. This is Histidinol-phosphate aminotransferase from Hydrogenobaculum sp. (strain Y04AAS1).